The following is a 205-amino-acid chain: Small ribosomal subunit protein uS4 (205 aa).

A disordered region spans residues 26-47 (PVNKREYGPGQHGQRRKQKPSD). The region spanning 94 to 154 (RRLDAVVYRL…EKSKHLAIVL (61 aa)) is the S4 RNA-binding domain.

It belongs to the universal ribosomal protein uS4 family. As to quaternary structure, part of the 30S ribosomal subunit. Contacts protein S5. The interaction surface between S4 and S5 is involved in control of translational fidelity.

One of the primary rRNA binding proteins, it binds directly to 16S rRNA where it nucleates assembly of the body of the 30S subunit. Functionally, with S5 and S12 plays an important role in translational accuracy. This chain is Small ribosomal subunit protein uS4, found in Gluconacetobacter diazotrophicus (strain ATCC 49037 / DSM 5601 / CCUG 37298 / CIP 103539 / LMG 7603 / PAl5).